Reading from the N-terminus, the 311-residue chain is HPr kinase/phosphorylase (311 aa).

Residues H139 and K160 contribute to the active site. An ATP-binding site is contributed by 154-161; it reads GESGVGKS. Position 161 (S161) interacts with Mg(2+). D178 functions as the Proton acceptor; for phosphorylation activity. Proton donor; for dephosphorylation activity in the catalytic mechanism. The segment at 202–211 is important for the catalytic mechanism of both phosphorylation and dephosphorylation; it reads IEIRGIGILD. Mg(2+) is bound at residue E203. The active site involves R244. An important for the catalytic mechanism of dephosphorylation region spans residues 265 to 270; that stretch reads PVRPGR.

Belongs to the HPrK/P family. Homohexamer. Mg(2+) serves as cofactor.

It carries out the reaction [HPr protein]-L-serine + ATP = [HPr protein]-O-phospho-L-serine + ADP + H(+). The enzyme catalyses [HPr protein]-O-phospho-L-serine + phosphate + H(+) = [HPr protein]-L-serine + diphosphate. Its function is as follows. Catalyzes the ATP- as well as the pyrophosphate-dependent phosphorylation of a specific serine residue in HPr, a phosphocarrier protein of the phosphoenolpyruvate-dependent sugar phosphotransferase system (PTS). HprK/P also catalyzes the pyrophosphate-producing, inorganic phosphate-dependent dephosphorylation (phosphorolysis) of seryl-phosphorylated HPr (P-Ser-HPr). The two antagonistic activities of HprK/P are regulated by several intracellular metabolites, which change their concentration in response to the absence or presence of rapidly metabolisable carbon sources (glucose, fructose, etc.) in the growth medium. Therefore, by controlling the phosphorylation state of HPr, HPrK/P is a sensor enzyme that plays a major role in the regulation of carbon metabolism and sugar transport: it mediates carbon catabolite repression (CCR), and regulates PTS-catalyzed carbohydrate uptake and inducer exclusion. In Caldicellulosiruptor bescii (strain ATCC BAA-1888 / DSM 6725 / KCTC 15123 / Z-1320) (Anaerocellum thermophilum), this protein is HPr kinase/phosphorylase.